The primary structure comprises 38 residues: Potassium channel toxin alpha-KTx 3.12 (38 aa).

Disulfide bonds link Cys8–Cys28, Cys14–Cys33, and Cys18–Cys35. Lysine amide is present on Lys38.

Belongs to the short scorpion toxin superfamily. Potassium channel inhibitor family. Alpha-KTx 03 subfamily. In terms of tissue distribution, expressed by the venom gland.

The protein localises to the secreted. Its function is as follows. Potent inhibitor of voltage-dependent potassium channels, with a preference for Kv1.3/KCNA3 versus Kv1.2/KCNA2. This chain is Potassium channel toxin alpha-KTx 3.12, found in Androctonus amoreuxi (African fattail scorpion).